Consider the following 962-residue polypeptide: pH-response regulator protein palF/prr-3 (962 aa).

4 disordered regions span residues Met-1 to Thr-43, Ala-225 to Ser-326, Thr-568 to Asn-675, and Arg-689 to Arg-962. Over residues Ile-237–Pro-246 the composition is skewed to basic residues. 3 stretches are compositionally biased toward polar residues: residues Gly-297 to His-307, Ser-314 to Ser-326, and Pro-581 to Val-596. Composition is skewed to low complexity over residues Pro-696 to Ser-722 and Pro-738 to Ala-747. Residues Thr-793–Leu-805 show a composition bias toward basic and acidic residues. Residues Ala-830–Pro-839 show a composition bias toward low complexity. The segment covering Ser-840–Ala-849 has biased composition (pro residues). Residues Pro-913–Ser-928 are compositionally biased toward low complexity. The segment covering Gly-929–Ser-949 has biased composition (polar residues).

This sequence belongs to the arrestin family. PalF/RIM8 subfamily.

Required for the proteolytic cleavage of the transcription factor pacc-1 in response to alkaline ambient pH. This chain is pH-response regulator protein palF/prr-3 (prr-3), found in Neurospora crassa (strain ATCC 24698 / 74-OR23-1A / CBS 708.71 / DSM 1257 / FGSC 987).